Here is a 258-residue protein sequence, read N- to C-terminus: Imidazole glycerol phosphate synthase subunit HisF (258 aa).

Active-site residues include Asp11 and Asp130.

This sequence belongs to the HisA/HisF family. As to quaternary structure, heterodimer of HisH and HisF.

The protein localises to the cytoplasm. The catalysed reaction is 5-[(5-phospho-1-deoxy-D-ribulos-1-ylimino)methylamino]-1-(5-phospho-beta-D-ribosyl)imidazole-4-carboxamide + L-glutamine = D-erythro-1-(imidazol-4-yl)glycerol 3-phosphate + 5-amino-1-(5-phospho-beta-D-ribosyl)imidazole-4-carboxamide + L-glutamate + H(+). It functions in the pathway amino-acid biosynthesis; L-histidine biosynthesis; L-histidine from 5-phospho-alpha-D-ribose 1-diphosphate: step 5/9. In terms of biological role, IGPS catalyzes the conversion of PRFAR and glutamine to IGP, AICAR and glutamate. The HisF subunit catalyzes the cyclization activity that produces IGP and AICAR from PRFAR using the ammonia provided by the HisH subunit. The protein is Imidazole glycerol phosphate synthase subunit HisF of Gluconacetobacter diazotrophicus (strain ATCC 49037 / DSM 5601 / CCUG 37298 / CIP 103539 / LMG 7603 / PAl5).